The sequence spans 160 residues: Cytochrome b6-f complex subunit 4 (160 aa).

3 consecutive transmembrane segments (helical) span residues 36-56 (LLYI…GLAV), 95-115 (LLGI…PFIE), and 128-148 (IAMA…IGAC).

This sequence belongs to the cytochrome b family. PetD subfamily. In terms of assembly, the 4 large subunits of the cytochrome b6-f complex are cytochrome b6, subunit IV (17 kDa polypeptide, PetD), cytochrome f and the Rieske protein, while the 4 small subunits are PetG, PetL, PetM and PetN. The complex functions as a dimer.

It localises to the cellular thylakoid membrane. Functionally, component of the cytochrome b6-f complex, which mediates electron transfer between photosystem II (PSII) and photosystem I (PSI), cyclic electron flow around PSI, and state transitions. This chain is Cytochrome b6-f complex subunit 4, found in Prochlorococcus marinus (strain MIT 9303).